Here is a 312-residue protein sequence, read N- to C-terminus: Light-independent protochlorophyllide reductase iron-sulfur ATP-binding protein (312 aa).

ATP-binding positions include Gly55 to Thr60 and Lys84. A Mg(2+)-binding site is contributed by Ser59. Residues Cys140 and Cys174 each coordinate [4Fe-4S] cluster. ATP contacts are provided by residues Asn225–Arg226 and Pro249–Leu251.

Belongs to the NifH/BchL/ChlL family. As to quaternary structure, homodimer. Protochlorophyllide reductase is composed of three subunits; BchL, BchN and BchB. Requires [4Fe-4S] cluster as cofactor.

The catalysed reaction is chlorophyllide a + oxidized 2[4Fe-4S]-[ferredoxin] + 2 ADP + 2 phosphate = protochlorophyllide a + reduced 2[4Fe-4S]-[ferredoxin] + 2 ATP + 2 H2O. It participates in porphyrin-containing compound metabolism; bacteriochlorophyll biosynthesis (light-independent). Functionally, component of the dark-operative protochlorophyllide reductase (DPOR) that uses Mg-ATP and reduced ferredoxin to reduce ring D of protochlorophyllide (Pchlide) to form chlorophyllide a (Chlide). This reaction is light-independent. The L component serves as a unique electron donor to the NB-component of the complex, and binds Mg-ATP. This Rhodopseudomonas palustris (strain HaA2) protein is Light-independent protochlorophyllide reductase iron-sulfur ATP-binding protein.